The following is a 413-amino-acid chain: Putative F-box protein At3g58820 (413 aa).

Residues 1 to 48 (MDGVSSLPNELLCHILSFLTTKEAALTSILSKRWRNLIAFVPNLYIDD) enclose the F-box domain.

The chain is Putative F-box protein At3g58820 from Arabidopsis thaliana (Mouse-ear cress).